A 668-amino-acid chain; its full sequence is Golgin subfamily A member 6-like protein 1 (668 aa).

Disordered regions lie at residues 1–120, 323–356, 384–466, 481–591, and 603–639; these read MLMW…HQEA, IREQ…RQEE, EKMH…EMWR, KEKM…REQE, and EQEE…MRRQ. Positions 15–41 are enriched in basic residues; the sequence is LPTHPHLPTHPHLPTHPHLPTHPHLPT. Residues 51-72 are compositionally biased toward basic and acidic residues; that stretch reads MSKETRQSKLAEAKEQLTDHHP. Polar residues-rich tracts occupy residues 73 to 83 and 91 to 103; these read QTNPSVGTAAS and NNGT…TSGG. Residues 106–120 are compositionally biased toward basic and acidic residues; sequence SPEDEQKASHQHQEA. A coiled-coil region spans residues 177–663; that stretch reads LEQALSAVAT…EEKMQEHQEH (487 aa).

Belongs to the GOLGA6 family.

The protein is Golgin subfamily A member 6-like protein 1 (GOLGA6L1) of Homo sapiens (Human).